A 233-amino-acid chain; its full sequence is Large ribosomal subunit protein uL1 (233 aa).

This sequence belongs to the universal ribosomal protein uL1 family. Part of the 50S ribosomal subunit.

In terms of biological role, binds directly to 23S rRNA. The L1 stalk is quite mobile in the ribosome, and is involved in E site tRNA release. Its function is as follows. Protein L1 is also a translational repressor protein, it controls the translation of the L11 operon by binding to its mRNA. The chain is Large ribosomal subunit protein uL1 from Syntrophomonas wolfei subsp. wolfei (strain DSM 2245B / Goettingen).